Consider the following 256-residue polypeptide: Phosphonates import ATP-binding protein PhnC (256 aa).

In terms of domain architecture, ABC transporter spans 5–253; that stretch reads LRITGLVKEY…MLKTIYGGES (249 aa). Residue 38 to 45 participates in ATP binding; it reads GPSGTGKS.

The protein belongs to the ABC transporter superfamily. Phosphonates importer (TC 3.A.1.9.1) family. As to quaternary structure, the complex is composed of two ATP-binding proteins (PhnC), two transmembrane proteins (PhnE) and a solute-binding protein (PhnD).

Its subcellular location is the cell inner membrane. It carries out the reaction phosphonate(out) + ATP + H2O = phosphonate(in) + ADP + phosphate + H(+). In terms of biological role, part of the ABC transporter complex PhnCDE involved in phosphonates import. Responsible for energy coupling to the transport system. This is Phosphonates import ATP-binding protein PhnC from Bordetella parapertussis (strain 12822 / ATCC BAA-587 / NCTC 13253).